The primary structure comprises 503 residues: MDLIPGFSTETWVLLATSLVLLYLYGTYSHGLFKKLGIPGPRPLPYFGNILGYRKGVDHFDKKCFQQYGKMWGVYDGRQPLLAVTDPNMIKSVLVKECYSVFTNRRSFGPLGAMRNALSLAEDEEWKRIRTLLSPTFTSGKLKEMFPIISHYGDLLVSNLRKEAEKGKPVTMKDIFGAYSMDVITSTAFGVNIDSLNNPQDPFVENSKKLLKFSFFDPFLLSLIFFPFLTPIFEVLNITLFPKSSVNFFTKSVKRMKESRLTDQQKRRVDLLQLMINSQNSKEMDPHKSLSNEELVAQGIIFIFAGYETTSSALSLLAYELATHPDVQQKLQEEIEATFPNKAPPTYDALAQMEYLDMVVNETLRLYPIAARLERACKKDVEIHGVFVPKGTVVVVPVFVLHRDPDLWPEPEEFRPERFSKKHKDTINPYTYLPFGTGPRNCIGMRFALMNMKLALVRVLQNFSFKPCKETQIPLKLTTQGLTQPEKPVVLKILPRDGTVSGA.

A heme-binding site is contributed by cysteine 442.

The protein belongs to the cytochrome P450 family. Requires heme as cofactor.

It is found in the endoplasmic reticulum membrane. It localises to the microsome membrane. It carries out the reaction an organic molecule + reduced [NADPH--hemoprotein reductase] + O2 = an alcohol + oxidized [NADPH--hemoprotein reductase] + H2O + H(+). Its function is as follows. Cytochromes P450 are a group of heme-thiolate monooxygenases. In liver microsomes, this enzyme is involved in an NADPH-dependent electron transport pathway. It oxidizes a variety of structurally unrelated compounds, including steroids, fatty acids, and xenobiotics. The chain is Cytochrome P450 3A29 (CYP3A29) from Sus scrofa (Pig).